We begin with the raw amino-acid sequence, 353 residues long: (S)-8-amino-7-oxononanoate synthase BioU (353 aa).

An NAD(+)-binding site is contributed by 10–14 (GTGGI). The active-site Nucleophile is the K147. Residue K147 is modified to Allysine. 214–215 (GT) is a binding site for NAD(+). E218 acts as the Proton acceptor in catalysis. The active-site Proton donor and proton acceptor is H222.

This sequence belongs to the BioU family. Monomer.

The catalysed reaction is (8S)-8-amino-7-oxononanoate + L-lysyl-[protein] + CO2 = (S)-2-amino-6-oxohexanoyl-[protein] + (7R,8S)-8-amino-7-(carboxyamino)nonanoate + 2 H(+). It catalyses the reaction (8S)-8-amino-7-oxononanoate + L-lysyl-[protein] + NADPH + H(+) = N(6)-[(2S,3R)-2-amino-8-carboxyoctan-3-yl]-L-lysyl-[protein] + NADP(+) + H2O. It carries out the reaction N(6)-[(2S,3R)-2-amino-8-carboxyoctan-3-yl]-L-lysyl-[protein] + CO2 + NADP(+) + H2O = (S)-2-amino-6-oxohexanoyl-[protein] + (7R,8S)-8-amino-7-(carboxyamino)nonanoate + NADPH + 3 H(+). The enzyme catalyses (8S)-8-amino-7-oxononanoate + L-lysyl-[protein] + NADH + H(+) = N(6)-[(2S,3R)-2-amino-8-carboxyoctan-3-yl]-L-lysyl-[protein] + NAD(+) + H2O. The catalysed reaction is N(6)-[(2S,3R)-2-amino-8-carboxyoctan-3-yl]-L-lysyl-[protein] + CO2 + NAD(+) + H2O = (S)-2-amino-6-oxohexanoyl-[protein] + (7R,8S)-8-amino-7-(carboxyamino)nonanoate + NADH + 3 H(+). It functions in the pathway cofactor biosynthesis; biotin biosynthesis. A 'suicide' enzyme that participates in biotin synthesis. Catalyzes the formation of (S)-8-amino-7-oxononanoate (DAN-carbamic acid) from (7R,8S)-8-amino-7-(carboxyamino)nonanoate (DAN), a function equivalent to the cannonical BioA reaction and the first half-reaction of BioD. The cellular requirement for biotin is thought be low enough that this single turnover enzyme supplies a sufficient amount of the cofactor. Overall it catalyzes three reactions: formation of a covalent linkage with 8-amino-7-oxononanoate to yield a BioU-DAN conjugate at the epsilon-amino group of Lys124 of BioU using NAD(P)H, carboxylation of the conjugate to form BioU-DAN-carbamic acid, and release of DAN-carbamic acid using NAD(P)+. Complements a bioA deletion in E.coli. In Haloferax mediterranei (strain ATCC 33500 / DSM 1411 / JCM 8866 / NBRC 14739 / NCIMB 2177 / R-4) (Halobacterium mediterranei), this protein is (S)-8-amino-7-oxononanoate synthase BioU.